Here is a 254-residue protein sequence, read N- to C-terminus: 2,3-bisphosphoglycerate-dependent phosphoglycerate mutase (254 aa).

Substrate-binding positions include 15–22 (RHGQSEWN), 28–29 (TG), arginine 67, 94–97 (ERHY), lysine 105, 121–122 (RR), and 188–189 (GN). Residue histidine 16 is the Tele-phosphohistidine intermediate of the active site. The Proton donor/acceptor role is filled by glutamate 94.

This sequence belongs to the phosphoglycerate mutase family. BPG-dependent PGAM subfamily.

The enzyme catalyses (2R)-2-phosphoglycerate = (2R)-3-phosphoglycerate. It participates in carbohydrate degradation; glycolysis; pyruvate from D-glyceraldehyde 3-phosphate: step 3/5. Catalyzes the interconversion of 2-phosphoglycerate and 3-phosphoglycerate. The sequence is that of 2,3-bisphosphoglycerate-dependent phosphoglycerate mutase from Corynebacterium jeikeium (strain K411).